The chain runs to 196 residues: Small ribosomal subunit protein uS4c (196 aa).

The disordered stretch occupies residues 17–36; sequence ALPGLTRKTPKSGSNLKKKF. The S4 RNA-binding domain occupies 89 to 169; sequence MRLDNILFRL…LPKHLTIDTL (81 aa).

Belongs to the universal ribosomal protein uS4 family. Part of the 30S ribosomal subunit. Contacts protein S5. The interaction surface between S4 and S5 is involved in control of translational fidelity.

The protein localises to the plastid. Its subcellular location is the chloroplast. In terms of biological role, one of the primary rRNA binding proteins, it binds directly to 16S rRNA where it nucleates assembly of the body of the 30S subunit. Functionally, with S5 and S12 plays an important role in translational accuracy. The sequence is that of Small ribosomal subunit protein uS4c (rps4) from Festuca gigantea (Giant fescue).